Reading from the N-terminus, the 157-residue chain is Dihydrofolate reductase type 15 (157 aa).

One can recognise a DHFR domain in the interval 2-156 (KLSLMAAISK…INYSYQIWQK (155 aa)).

Belongs to the dihydrofolate reductase family. Homodimer.

It catalyses the reaction (6S)-5,6,7,8-tetrahydrofolate + NADP(+) = 7,8-dihydrofolate + NADPH + H(+). The protein operates within cofactor biosynthesis; tetrahydrofolate biosynthesis; 5,6,7,8-tetrahydrofolate from 7,8-dihydrofolate: step 1/1. Its function is as follows. Key enzyme in folate metabolism. Catalyzes an essential reaction for de novo glycine and purine synthesis, and for DNA precursor synthesis. The protein is Dihydrofolate reductase type 15 (dhfrXV) of Escherichia coli.